Here is a 360-residue protein sequence, read N- to C-terminus: Phospho-N-acetylmuramoyl-pentapeptide-transferase (360 aa).

The next 10 membrane-spanning stretches (helical) occupy residues 25 to 45 (RGILGVLTALTLSLCLGPWMI), 73 to 93 (TMGGALILSSIGISTLLWADL), 97 to 117 (YVWVVLLVTLLFGAIGWVDDY), 135 to 155 (FWQSVFGLCAAIFLYTTAPSA), 170 to 190 (IPLGIGFIVLTYFVIVGSSNA), 199 to 219 (GLAIMPTVMVGGALGIFCYLS), 236 to 256 (AGELIVFSGALIGAGLGFLWF), 263 to 283 (VFMGDVGALALGAALGTMAVI), 288 to 308 (IVLFIMGGVFVMETLSVVIQV), and 338 to 358 (VIVRFWIITVILVLIGLATLK).

It belongs to the glycosyltransferase 4 family. MraY subfamily. Mg(2+) serves as cofactor.

Its subcellular location is the cell inner membrane. The catalysed reaction is UDP-N-acetyl-alpha-D-muramoyl-L-alanyl-gamma-D-glutamyl-meso-2,6-diaminopimeloyl-D-alanyl-D-alanine + di-trans,octa-cis-undecaprenyl phosphate = di-trans,octa-cis-undecaprenyl diphospho-N-acetyl-alpha-D-muramoyl-L-alanyl-D-glutamyl-meso-2,6-diaminopimeloyl-D-alanyl-D-alanine + UMP. It participates in cell wall biogenesis; peptidoglycan biosynthesis. Its function is as follows. Catalyzes the initial step of the lipid cycle reactions in the biosynthesis of the cell wall peptidoglycan: transfers peptidoglycan precursor phospho-MurNAc-pentapeptide from UDP-MurNAc-pentapeptide onto the lipid carrier undecaprenyl phosphate, yielding undecaprenyl-pyrophosphoryl-MurNAc-pentapeptide, known as lipid I. This Pseudomonas savastanoi pv. phaseolicola (strain 1448A / Race 6) (Pseudomonas syringae pv. phaseolicola (strain 1448A / Race 6)) protein is Phospho-N-acetylmuramoyl-pentapeptide-transferase.